Reading from the N-terminus, the 906-residue chain is Protein translocase subunit SecA (906 aa).

ATP contacts are provided by residues Gln-86, 104–108 (GEGKT), and Asp-499. Residues 862–886 (KPVVSRIDPKDRNPDDPTSWGRVSR) form a disordered region. Residues Cys-890, Cys-892, Cys-901, and His-902 each contribute to the Zn(2+) site.

It belongs to the SecA family. In terms of assembly, monomer and homodimer. Part of the essential Sec protein translocation apparatus which comprises SecA, SecYEG and auxiliary proteins SecDF-YajC and YidC. Requires Zn(2+) as cofactor.

Its subcellular location is the cell inner membrane. It is found in the cytoplasm. It carries out the reaction ATP + H2O + cellular proteinSide 1 = ADP + phosphate + cellular proteinSide 2.. Part of the Sec protein translocase complex. Interacts with the SecYEG preprotein conducting channel. Has a central role in coupling the hydrolysis of ATP to the transfer of proteins into and across the cell membrane, serving both as a receptor for the preprotein-SecB complex and as an ATP-driven molecular motor driving the stepwise translocation of polypeptide chains across the membrane. In Rickettsia africae (strain ESF-5), this protein is Protein translocase subunit SecA.